The chain runs to 254 residues: Alcohol dehydrogenase 1 (254 aa).

Position 10-33 (10-33) interacts with NAD(+); the sequence is FVAGLGGIGFDTSREIVKSGPKNL. Serine 138 is a binding site for substrate. The active-site Proton acceptor is the tyrosine 151.

Belongs to the short-chain dehydrogenases/reductases (SDR) family. Homodimer.

The enzyme catalyses a primary alcohol + NAD(+) = an aldehyde + NADH + H(+). It catalyses the reaction a secondary alcohol + NAD(+) = a ketone + NADH + H(+). This Drosophila mulleri (Fruit fly) protein is Alcohol dehydrogenase 1 (Adh1).